Reading from the N-terminus, the 134-residue chain is Histone-like protein Rv3852 (134 aa).

A compositionally biased stretch (basic and acidic residues) spans 1–10 (MPDPQDRPDS). The tract at residues 1 to 68 (MPDPQDRPDS…PAEAPVSLQQ (68 aa)) is disordered. The segment covering 23 to 48 (LPAKKAAKKAPARKTPAKKAPAKKTP) has biased composition (basic residues). Residues 111–128 (PVPLIVAVTLSLLALLLI) traverse the membrane as a helical segment.

As to quaternary structure, homodimer in solution. Is probably able to self-associate in higher oligomers along the DNA molecules. Interacts with the N-terminal region of Wag31.

The protein resides in the cell inner membrane. With respect to regulation, can interact directly in vitro with the compound agrimophol, a phloroglucinol from the A.pilosa plant, whose extracts have been used in traditional Chinese medicine to treat pulmonary infections. Interaction with agrimophol leads to disruption of Rv3852's DNA binding function. In terms of biological role, binds DNA in vitro. It has been proposed that Rv3852 plays a role in nucleoid organization and may function as an anchorage to tether the DNA to the membrane. However, it was later shown that it has no influence on nucleoid shape or compaction. It plays no role in virulence and only a minor role in the control of transcription, and does not appear to function as a typical nucleoid-associated protein. Functionally, interacts with Wag31, an important cell shape and cell wall integrity determinant, and facilitates the localization of Wag31 to the cell poles and the cell wall, thus enabling nascent peptidoglycan synthesis. The polypeptide is Histone-like protein Rv3852 (Mycobacterium tuberculosis (strain ATCC 25618 / H37Rv)).